We begin with the raw amino-acid sequence, 252 residues long: Neurotrophic factor BDNF precursor form (252 aa).

Positions 1–18 are cleaved as a signal peptide; that stretch reads MTILFLTMVISYFGCMKA. Positions 19 to 133 are excised as a propeptide; the sequence is APMKEANVRG…AANMSMRVRR (115 aa). The disordered stretch occupies residues 43-62; the sequence is LESVNGPKAGSRGLTSSSSS. Asn-126 carries N-linked (GlcNAc...) asparagine glycosylation. 3 cysteine pairs are disulfide-bonded: Cys-146–Cys-213, Cys-191–Cys-242, and Cys-201–Cys-244.

This sequence belongs to the NGF-beta family. Monomers and homodimers. Binds to NTRK2/TRKB. Can form heterodimers with other neurotrophin family members, such as NTF3 and NTF4 (in vitro), but the physiological relevance of this is not clear. BDNF precursor form: interacts with the heterodimer formed by NGFR and SORCS2. Mature BDNF has much lower affinity for the heterodimer formed by NGFR and SORCS2. N-glycosylated and glycosulfated, contrary to mature BDNF. In terms of processing, mature BDNF is produced by proteolytic removal of the propeptide, catalyzed by a FURIN family member. In addition, the precursor form is proteolytically cleaved within the propeptide, but this is not an obligatory intermediate for the production of mature BDNF. Can be converted into mature BDNF by plasmin (PLG). As to expression, brain and central nervous system.

The protein localises to the secreted. Functionally, important signaling molecule that activates signaling cascades downstream of NTRK2. During development, promotes the survival and differentiation of selected neuronal populations of the peripheral and central nervous systems. Participates in axonal growth, pathfinding and in the modulation of dendritic growth and morphology. Major regulator of synaptic transmission and plasticity at adult synapses in many regions of the CNS. The versatility of BDNF is emphasized by its contribution to a range of adaptive neuronal responses including long-term potentiation (LTP), long-term depression (LTD), certain forms of short-term synaptic plasticity, as well as homeostatic regulation of intrinsic neuronal excitability. Important signaling molecule that activates signaling cascades downstream of NTRK2. Activates signaling cascades via the heterodimeric receptor formed by NGFR and SORCS2. Signaling via NGFR and SORCS2 plays a role in synaptic plasticity and long-term depression (LTD). Binding to NGFR and SORCS2 promotes neuronal apoptosis. Promotes neuronal growth cone collapse. In Sus scrofa (Pig), this protein is Neurotrophic factor BDNF precursor form (BDNF).